A 220-amino-acid chain; its full sequence is Guanylate kinase (220 aa).

Residues 3–180 (GRLFVMTGAS…AVADFLAILT (178 aa)) enclose the Guanylate kinase-like domain. 10–17 (GASGVGKG) provides a ligand contact to ATP.

Belongs to the guanylate kinase family.

It localises to the cytoplasm. It catalyses the reaction GMP + ATP = GDP + ADP. In terms of biological role, essential for recycling GMP and indirectly, cGMP. The protein is Guanylate kinase of Thermus thermophilus (strain ATCC BAA-163 / DSM 7039 / HB27).